We begin with the raw amino-acid sequence, 600 residues long: Aspartate--tRNA(Asp/Asn) ligase (600 aa).

L-aspartate is bound at residue Glu-181. The segment at 205-208 is aspartate; the sequence is QQYK. Arg-227 lines the L-aspartate pocket. ATP is bound by residues 227 to 229 and Gln-236; that span reads RDE. His-455 provides a ligand contact to L-aspartate. Glu-490 is a binding site for ATP. Arg-497 provides a ligand contact to L-aspartate. Residue 542-545 participates in ATP binding; that stretch reads GLDR.

Belongs to the class-II aminoacyl-tRNA synthetase family. Type 1 subfamily. In terms of assembly, homodimer.

Its subcellular location is the cytoplasm. It carries out the reaction tRNA(Asx) + L-aspartate + ATP = L-aspartyl-tRNA(Asx) + AMP + diphosphate. In terms of biological role, aspartyl-tRNA synthetase with relaxed tRNA specificity since it is able to aspartylate not only its cognate tRNA(Asp) but also tRNA(Asn). Reaction proceeds in two steps: L-aspartate is first activated by ATP to form Asp-AMP and then transferred to the acceptor end of tRNA(Asp/Asn). This chain is Aspartate--tRNA(Asp/Asn) ligase, found in Methylacidiphilum infernorum (isolate V4) (Methylokorus infernorum (strain V4)).